The following is a 306-amino-acid chain: uncharacterized protein (306 aa).

This sequence to M.tuberculosis Rv1486c, M.bovis Mb1522c and M.leprae ML1804.

This is an uncharacterized protein from Mycobacterium avium.